The chain runs to 145 residues: Bacilliredoxin GK1781 (145 aa).

The protein belongs to the bacilliredoxin family.

This is Bacilliredoxin GK1781 from Geobacillus kaustophilus (strain HTA426).